The sequence spans 282 residues: Putative phosphatase MPN_383 (282 aa).

Residue Asp11 is the Nucleophile of the active site. Asp11 contacts Mg(2+). Residue Leu12 participates in phosphate binding. Asp13 is a Mg(2+) binding site. Residues 45-46 and Lys207 contribute to the phosphate site; that span reads TG. Asp230 serves as a coordination point for Mg(2+). A phosphate-binding site is contributed by Asn233.

The protein belongs to the HAD-like hydrolase superfamily. Cof family. Mg(2+) serves as cofactor.

The sequence is that of Putative phosphatase MPN_383 from Mycoplasma pneumoniae (strain ATCC 29342 / M129 / Subtype 1) (Mycoplasmoides pneumoniae).